Reading from the N-terminus, the 503-residue chain is Maturase K (503 aa).

Belongs to the intron maturase 2 family. MatK subfamily.

It localises to the plastid. It is found in the chloroplast. Usually encoded in the trnK tRNA gene intron. Probably assists in splicing its own and other chloroplast group II introns. This Purshia tridentata (Antelope bitterbrush) protein is Maturase K.